We begin with the raw amino-acid sequence, 119 residues long: Flagellar transcriptional regulator FlhD (119 aa).

This sequence belongs to the FlhD family. Homodimer; disulfide-linked. Forms a heterohexamer composed of two FlhC and four FlhD subunits. Each FlhC binds a FlhD dimer, forming a heterotrimer, and a hexamer assembles by dimerization of two heterotrimers.

Its subcellular location is the cytoplasm. Functionally, functions in complex with FlhC as a master transcriptional regulator that regulates transcription of several flagellar and non-flagellar operons by binding to their promoter region. Activates expression of class 2 flagellar genes, including fliA, which is a flagellum-specific sigma factor that turns on the class 3 genes. Also regulates genes whose products function in a variety of physiological pathways. This chain is Flagellar transcriptional regulator FlhD, found in Shigella boydii serotype 4 (strain Sb227).